A 251-amino-acid polypeptide reads, in one-letter code: Tritrans,polycis-undecaprenyl-diphosphate synthase (geranylgeranyl-diphosphate specific) (251 aa).

Aspartate 29 is an active-site residue. Residue aspartate 29 participates in Mg(2+) binding. Residues 30-33 (GNRR), phenylalanine 34, histidine 46, and 74-76 (STE) each bind substrate. Asparagine 77 (proton acceptor) is an active-site residue. Substrate is bound by residues phenylalanine 78, arginine 80, arginine 200, and 206-208 (RLS).

This sequence belongs to the UPP synthase family. Homodimer. It depends on Mg(2+) as a cofactor.

The catalysed reaction is geranylgeranyl diphosphate + 7 isopentenyl diphosphate = tri-trans,hepta-cis-undecaprenyl diphosphate + 7 diphosphate. Functionally, catalyzes the sequential condensation of isopentenyl diphosphate (IPP) with geranylgeranyl diphosphate (GGPP) to yield (2Z,6Z,10Z,14Z,18Z,22Z,26Z,30E,34E,38E)-undecaprenyl diphosphate (tritrans,heptacis-UPP). It is probably the precursor of glycosyl carrier lipids. The sequence is that of Tritrans,polycis-undecaprenyl-diphosphate synthase (geranylgeranyl-diphosphate specific) from Archaeoglobus fulgidus (strain ATCC 49558 / DSM 4304 / JCM 9628 / NBRC 100126 / VC-16).